Consider the following 278-residue polypeptide: Dermonecrotic toxin LhSicTox-alphaIV1iii (278 aa).

H5 is a catalytic residue. Positions 25 and 27 each coordinate Mg(2+). H41 serves as the catalytic Nucleophile. 2 disulfides stabilise this stretch: C45-C51 and C47-C192. D85 is a Mg(2+) binding site.

It belongs to the arthropod phospholipase D family. Class II subfamily. The cofactor is Mg(2+). Expressed by the venom gland.

Its subcellular location is the secreted. It catalyses the reaction an N-(acyl)-sphingosylphosphocholine = an N-(acyl)-sphingosyl-1,3-cyclic phosphate + choline. It carries out the reaction an N-(acyl)-sphingosylphosphoethanolamine = an N-(acyl)-sphingosyl-1,3-cyclic phosphate + ethanolamine. The catalysed reaction is a 1-acyl-sn-glycero-3-phosphocholine = a 1-acyl-sn-glycero-2,3-cyclic phosphate + choline. The enzyme catalyses a 1-acyl-sn-glycero-3-phosphoethanolamine = a 1-acyl-sn-glycero-2,3-cyclic phosphate + ethanolamine. Its function is as follows. Dermonecrotic toxins cleave the phosphodiester linkage between the phosphate and headgroup of certain phospholipids (sphingolipid and lysolipid substrates), forming an alcohol (often choline) and a cyclic phosphate. This toxin acts on sphingomyelin (SM). It may also act on ceramide phosphoethanolamine (CPE), lysophosphatidylcholine (LPC) and lysophosphatidylethanolamine (LPE), but not on lysophosphatidylserine (LPS), and lysophosphatidylglycerol (LPG). It acts by transphosphatidylation, releasing exclusively cyclic phosphate products as second products. Induces dermonecrosis, hemolysis, increased vascular permeability, edema, inflammatory response, and platelet aggregation. The sequence is that of Dermonecrotic toxin LhSicTox-alphaIV1iii from Loxosceles hirsuta (Recluse spider).